The sequence spans 200 residues: Large ribosomal subunit protein uL4 (200 aa).

The disordered stretch occupies residues 38 to 72 (GRQGSKQQKTRSDVSGGGKRPWRQKGTGRARAGTI).

It belongs to the universal ribosomal protein uL4 family. In terms of assembly, part of the 50S ribosomal subunit.

In terms of biological role, one of the primary rRNA binding proteins, this protein initially binds near the 5'-end of the 23S rRNA. It is important during the early stages of 50S assembly. It makes multiple contacts with different domains of the 23S rRNA in the assembled 50S subunit and ribosome. Functionally, forms part of the polypeptide exit tunnel. This chain is Large ribosomal subunit protein uL4, found in Pseudomonas fluorescens (strain ATCC BAA-477 / NRRL B-23932 / Pf-5).